A 387-amino-acid polypeptide reads, in one-letter code: Cobalt-precorrin-5B C(1)-methyltransferase (387 aa).

It belongs to the CbiD family.

It carries out the reaction Co-precorrin-5B + S-adenosyl-L-methionine = Co-precorrin-6A + S-adenosyl-L-homocysteine. The protein operates within cofactor biosynthesis; adenosylcobalamin biosynthesis; cob(II)yrinate a,c-diamide from sirohydrochlorin (anaerobic route): step 6/10. Catalyzes the methylation of C-1 in cobalt-precorrin-5B to form cobalt-precorrin-6A. The chain is Cobalt-precorrin-5B C(1)-methyltransferase from Desulfitobacterium hafniense (strain Y51).